The following is a 276-amino-acid chain: NH(3)-dependent NAD(+) synthetase (276 aa).

Residue 43 to 50 coordinates ATP; sequence GISGGVDS. Aspartate 49 serves as a coordination point for Mg(2+). A deamido-NAD(+)-binding site is contributed by arginine 146. Residue threonine 166 participates in ATP binding. Glutamate 171 contributes to the Mg(2+) binding site. Deamido-NAD(+) is bound by residues lysine 179 and aspartate 186. The ATP site is built by lysine 195 and threonine 217. Deamido-NAD(+) is bound at residue 266-267; that stretch reads HK.

It belongs to the NAD synthetase family. Homodimer.

The catalysed reaction is deamido-NAD(+) + NH4(+) + ATP = AMP + diphosphate + NAD(+) + H(+). It participates in cofactor biosynthesis; NAD(+) biosynthesis; NAD(+) from deamido-NAD(+) (ammonia route): step 1/1. Functionally, catalyzes the ATP-dependent amidation of deamido-NAD to form NAD. Uses ammonia as a nitrogen source. The chain is NH(3)-dependent NAD(+) synthetase from Shewanella woodyi (strain ATCC 51908 / MS32).